Consider the following 678-residue polypeptide: Endoplasmic reticulum membrane-associated RNA degradation protein (678 aa).

2 helical membrane passes run 390 to 410 (LLAF…LSVF) and 587 to 607 (VLSL…AVCG).

The protein resides in the endoplasmic reticulum membrane. In terms of biological role, may play a role in neuronal migration during embryonic development. The protein is Endoplasmic reticulum membrane-associated RNA degradation protein (ERMARD) of Homo sapiens (Human).